The chain runs to 584 residues: Beta-(1--&gt;2)glucan export ATP-binding/permease protein NdvA (584 aa).

The 281-residue stretch at 21–301 (VSLVVAANII…MRQFSTQIFE (281 aa)) folds into the ABC transmembrane type-1 domain. Transmembrane regions (helical) follow at residues 29–49 (IILA…IDAI), 57–77 (DILF…VLVA), 136–156 (THLA…SMDV), 158–178 (LTLV…MVMD), 248–268 (IAST…VQSG), and 272–292 (VGDV…LDQM). In terms of domain architecture, ABC transporter spans 335–569 (VEFRHVSFDF…GGRFAALLHT (235 aa)). 368–375 (GPTGAGKT) is a binding site for ATP.

This sequence belongs to the ABC transporter superfamily. Beta-(1--&gt;2)glucan exporter (TC 3.A.1.108.1) family. In terms of assembly, homodimer.

It is found in the cell inner membrane. The catalysed reaction is [(1-&gt;2)-beta-D-glucosyl](n)(in) + ATP + H2O = [(1-&gt;2)-beta-D-glucosyl](n)(out) + ADP + phosphate + H(+). In terms of biological role, involved in beta-(1--&gt;2)glucan export. Transmembrane domains (TMD) form a pore in the inner membrane and the ATP-binding domain (NBD) is responsible for energy generation. The sequence is that of Beta-(1--&gt;2)glucan export ATP-binding/permease protein NdvA from Agrobacterium vitis (Rhizobium vitis).